Consider the following 262-residue polypeptide: tRNA pseudouridine synthase A (262 aa).

Residue Asp51 is the Nucleophile of the active site. Residue Tyr109 coordinates substrate.

It belongs to the tRNA pseudouridine synthase TruA family. Homodimer.

The catalysed reaction is uridine(38/39/40) in tRNA = pseudouridine(38/39/40) in tRNA. Its function is as follows. Formation of pseudouridine at positions 38, 39 and 40 in the anticodon stem and loop of transfer RNAs. In Aliivibrio salmonicida (strain LFI1238) (Vibrio salmonicida (strain LFI1238)), this protein is tRNA pseudouridine synthase A.